Reading from the N-terminus, the 109-residue chain is MLPPGPLLVLPVGARVSRGGLSPTERSCISRHTQQYLRACYPSGRYGTKGLVVRWFTGGREPRGTDNEPSGNRSLEPHAWLTDVLTRLPEWPEERLAELLPLEGFTFFG.

This is an uncharacterized protein from Escherichia coli (strain K12).